The chain runs to 220 residues: Small ribosomal subunit protein uS3c (220 aa).

One can recognise a KH type-2 domain in the interval 48–119; that stretch reads VQKHTNNPFH…KLCLILIKID (72 aa).

This sequence belongs to the universal ribosomal protein uS3 family. In terms of assembly, part of the 30S ribosomal subunit.

It is found in the plastid. The protein localises to the chloroplast. The protein is Small ribosomal subunit protein uS3c (rps3) of Psilotum nudum (Whisk fern).